The following is a 148-amino-acid chain: Sec-independent protein translocase protein TatB (148 aa).

Residues 2 to 22 form a helical membrane-spanning segment; the sequence is FNDIGPLELVTLVVLAVLVFG. Basic and acidic residues-rich tracts occupy residues 100-110 and 128-148; these read VTDAVHGRESE and MTKK…ADAT. The disordered stretch occupies residues 100–148; the sequence is VTDAVHGRESETSASSSSANGSAGGTVDMTKKREQLEADERPPFDADAT.

The protein belongs to the TatB family. The Tat system comprises two distinct complexes: a TatABC complex, containing multiple copies of TatA, TatB and TatC subunits, and a separate TatA complex, containing only TatA subunits. Substrates initially bind to the TatABC complex, which probably triggers association of the separate TatA complex to form the active translocon.

The protein localises to the cell membrane. Part of the twin-arginine translocation (Tat) system that transports large folded proteins containing a characteristic twin-arginine motif in their signal peptide across membranes. Together with TatC, TatB is part of a receptor directly interacting with Tat signal peptides. TatB may form an oligomeric binding site that transiently accommodates folded Tat precursor proteins before their translocation. The chain is Sec-independent protein translocase protein TatB from Streptomyces avermitilis (strain ATCC 31267 / DSM 46492 / JCM 5070 / NBRC 14893 / NCIMB 12804 / NRRL 8165 / MA-4680).